A 250-amino-acid chain; its full sequence is Silencing boundary-establishment protein FUB1 (250 aa).

The tract at residues 179–250 (PDWSGGLPNP…GFGGSGSGFI (72 aa)) is disordered. Basic and acidic residues predominate over residues 202–213 (PNRRPAPRREDM). Residues 229 to 250 (PGSGGFGGSGSGGFGGSGSGFI) are compositionally biased toward gly residues.

This sequence belongs to the proteasome inhibitor PI31 family. As to quaternary structure, interacts with the 20S proteasome.

In terms of biological role, plays a role in the establishment of transcriptional silencing boundaries, preventing the propagation of heterochromatic silencing. In Saccharomyces cerevisiae (strain ATCC 204508 / S288c) (Baker's yeast), this protein is Silencing boundary-establishment protein FUB1.